The sequence spans 360 residues: Histidinol-phosphate aminotransferase (360 aa).

Lys221 is modified (N6-(pyridoxal phosphate)lysine).

This sequence belongs to the class-II pyridoxal-phosphate-dependent aminotransferase family. Histidinol-phosphate aminotransferase subfamily. In terms of assembly, homodimer. Pyridoxal 5'-phosphate is required as a cofactor.

It carries out the reaction L-histidinol phosphate + 2-oxoglutarate = 3-(imidazol-4-yl)-2-oxopropyl phosphate + L-glutamate. The protein operates within amino-acid biosynthesis; L-histidine biosynthesis; L-histidine from 5-phospho-alpha-D-ribose 1-diphosphate: step 7/9. This is Histidinol-phosphate aminotransferase from Desulfitobacterium hafniense (strain Y51).